The primary structure comprises 839 residues: Lon protease (839 aa).

The Lon N-terminal domain occupies 31–224; it reads LFLIPIKSRP…KVLLFLKKEI (194 aa). 377-384 contacts ATP; the sequence is GPPGVGKT. Residues 613 to 790 enclose the Lon proteolytic domain; that stretch reads ASVPGTALGL…EEVALLLFDE (178 aa). Catalysis depends on residues Ser-696 and Lys-739. Residues 807-839 are disordered; it reads IVNPTRKLSPKKKTTQKQKLSLSKQKGNNQKKK. Residues 823–832 show a composition bias toward low complexity; the sequence is KQKLSLSKQK.

The protein belongs to the peptidase S16 family. In terms of assembly, homohexamer. Organized in a ring with a central cavity.

Its subcellular location is the cytoplasm. It catalyses the reaction Hydrolysis of proteins in presence of ATP.. In terms of biological role, ATP-dependent serine protease that mediates the selective degradation of mutant and abnormal proteins as well as certain short-lived regulatory proteins. Required for cellular homeostasis and for survival from DNA damage and developmental changes induced by stress. Degrades polypeptides processively to yield small peptide fragments that are 5 to 10 amino acids long. Binds to DNA in a double-stranded, site-specific manner. In Leptospira interrogans serogroup Icterohaemorrhagiae serovar copenhageni (strain Fiocruz L1-130), this protein is Lon protease.